The primary structure comprises 59 residues: uncharacterized protein (59 aa).

This is an uncharacterized protein from Acidianus hospitalis (AFV-1).